A 613-amino-acid polypeptide reads, in one-letter code: Pescadillo homolog (613 aa).

The stretch at 259–344 (KELSNELETK…MKQIEHDIIX (86 aa)) forms a coiled coil. The tract at residues 268-333 (KESTEDNIIE…KNDQKNDQKN (66 aa)) is disordered. A compositionally biased stretch (basic and acidic residues) spans 278–333 (ENEKKTKNGKTENCEKNDQENEKKTKNDKTKNCEKNDQKNDQKNDQKNDQKNDQKN). A BRCT domain is found at 350–453 (SVKNLFKNHI…MILSCEDYNI (104 aa)). Positions 485–517 (LSEDPQYNKSIQKNKTNSENKXNNYNDNENDMS) are disordered. A coiled-coil region spans residues 492-601 (NKSIQKNKTN…ENRQKLTIEK (110 aa)). Residues 497-511 (KNKTNSENKXNNYND) show a composition bias toward low complexity.

Belongs to the pescadillo family.

The protein resides in the nucleus. The protein localises to the nucleolus. It is found in the nucleoplasm. In terms of biological role, required for maturation of ribosomal RNAs and formation of the large ribosomal subunit. The chain is Pescadillo homolog from Plasmodium yoelii yoelii.